The chain runs to 354 residues: Uroporphyrinogen decarboxylase (354 aa).

Substrate-binding positions include 27 to 31 (RQAGR), Asp-77, Tyr-154, Thr-209, and His-327.

This sequence belongs to the uroporphyrinogen decarboxylase family. Homodimer.

It is found in the cytoplasm. It catalyses the reaction uroporphyrinogen III + 4 H(+) = coproporphyrinogen III + 4 CO2. The protein operates within porphyrin-containing compound metabolism; protoporphyrin-IX biosynthesis; coproporphyrinogen-III from 5-aminolevulinate: step 4/4. Functionally, catalyzes the decarboxylation of four acetate groups of uroporphyrinogen-III to yield coproporphyrinogen-III. The chain is Uroporphyrinogen decarboxylase from Histophilus somni (strain 129Pt) (Haemophilus somnus).